We begin with the raw amino-acid sequence, 178 residues long: Fibroin heavy chain (178 aa).

The N-terminal stretch at 1–21 (MRVKTFVILCCALQYVAYTNA) is a signal peptide. The tract at residues 149 to 178 (AVGAGAGAGAAAGSGAGAGAGYGAASGAGA) is highly repetitive.

In terms of assembly, silk fibroin elementary unit consists in a disulfide-linked heavy and light chain and a p25 glycoprotein in molar ratios of 6:6:1. This results in a complex of approximately 2.3 MDa. Post-translationally, the interchain disulfide bridge is essential for the intracellular transport and secretion of fibroin. In terms of tissue distribution, produced exclusively in the posterior (PSG) section of silk glands, which are essentially modified salivary glands.

Functionally, core component of the silk filament; a strong, insoluble and chemically inert fiber. The chain is Fibroin heavy chain (FIBH) from Bombyx mandarina (Wild silk moth).